The chain runs to 2102 residues: MKYQLSILGDESRLDPTTFNAFTVYMVNVTNLMTNRQWNIYRRYSQFHELDSEIKSAFPKIKLPKLPKKYIFKNSTNRELVEERKLLLQKYLKDLVKHEQIEDSDCLINWLVPQNEPAFTSLNNPDKSGYLIKEGHVIRSWKKRYFVLKDGLIYYFKHQSDQEPTGMIPVIGSQIKRIGETERKFSFQIIPKNETFFPTFSIQARDEQDCNDWIKAIELSQQHFQDQEQYRKQEEEERQKKNNGARIKKSGSFEFSTLTSASAPTSPVQSSSSTSNMLPSSYQFSSDGSNNNSVCSSIGALGPNNSNNNNNNNNNSYYYSHSSNNHNHYNHHNNNHNNSHHHHHHHNGLNRGSSQVSLSVNTTSSNSSGSSSSTSLSRRHPPQKSKSDLNLSSVLHSNIRIGIDESDELYILNNSISNENLSSMLEQPGSYQQPQHQQGGGGGGGGGGGNIVNNLPPLSLTQRHISNLSSRSNSNSSGSSSGSGSSSGSGPIGSGGVGGGLNQPVKTSSQQPHHRKSNSSNNPSYISHLHYLQPSNSSSSISSSSSSSSASSASSASPFSSLFTTINQYFNPKSNLPYSPPSSPILNANNNNNNNNNNNNNNNNNNNNDFNLNNNNNNNNNNNNGNTASGSSCNTTPNLLPAPTNVSPIQNRARSSPMTSLPLPNNLLIPIPVFSLNDEYNNINNNNSNIESNNNNNNNNNNNNNNNNNNNNNNNNNNNNNNNNNNNNNNNNNNNTTELVNNNIESNDNDNNNSNNNNNNNNNSNNSLDLINKPLVKIIEPKKKEKKSKSKSKVASISDFITSKKKEKDKEKEKDKEKEKEKEIGGNISTSTTPNKKNGTLRSRALTLPVKPNDSILGTTPHHNHQNNHHHHGDISSINIIREKFISKTTRFSSDGKPRFDINQKLVSTKLSVDKKIRNFIEVVIDDIDHEATSGGNLQKQQHTQLIANDIKKLANTVLNMSVYDQREKNTQIVQSIQTLFATAISNKEMTSLVSKFLFIFSEFSRVVDVLNPVEKNLTNVINKQLQSQQQQQKQNETTGTTTGTAGSSVNPLSFSSNSILVQQKRLSRSLQSFNEINHHYSSSYHEPIIYSSSLNQYNGINIGSGTPTTTSGDNTPLTNTATSSTVSSYSEPSLISSQNQLPLSQQPQPQPQQQQQLNDSSSFPTSPISSRNDLISSNSSIYEPPLSDVASQLIEQQQEQQQQQHQEQPLQPQQQQQQQPQPQPISTLVFDKANQRSSSPILEKKSILTDLLKENYQKETTNNNGIGNMIILSEYDKKLQKQQLYPNQHVIITEEMRNKPERSFVCRICEDTYTQSQLAKHTPFCALTNKHDFKNHSSHDERLYSILNLVKGIICDSFASPNNSEQYSYLIDDEIISQLGQQLEYLFNIPYGPVESPKQCQDVINRVQAIIDENSTDMALHVFGKRICKIIEEKKALFVQYSKFQNAAQTTTSKGKKWSMWGIIPFIKDIIPSPSSKVDSSSSSQISSPILSSPPPPMKQPPPQVIVPPSSLTTSSNTTSISIADFEIIKPISRGAFGRVYLAQKKKTGDLYAIKVLKKLDTIRKNMVNHVIVERNILAMVQNEFVVKLFYAFQSTDKLYLVMEYLIGGDCASLLRALGCFEEHMAKHYIAETVLCLEYLHKSAIVHRDLKPDNMLIDGLGHIKLTDFGLSKIGIIDDKKMEDSGNTNTNTHFNFSTSPTNTSMMDDSSTTGNPNGNGNTSLNSSQTNILSPYPQRKNTLKTPLKKPVKKVVGTPDYLSPEILLGTGHGQTVDWWALGIILYEFLTGSPPFNDDTPELIFQHILHRDREMEWPEEISSEAKDLILKLLNPDPYKRLGANGAYEVKTHPFFANVNWDTLIDQEMDNIFLPKPENNYDTDYFWDRQSMYDDEAEDDFLTINQSQPQHQSQHQSQPQSQPQPQSQNLGQNNNNSESNNNNNNSNSNVSGQNINNSVSSSSNNNGSGNLNNICNNSNVNANNNNSNGNLGNNNNNKNNNINNDNDKNKNNNSNVQNNNNNNNNNILQQSSSPSSTSSSLSNSSNNNHNGGRQINNSKDSDNSIGGGKNNSKIEDIEKDPITFGNFSFTNINHLKDMNNFFLKNKS.

The PX domain occupies 1–118; that stretch reads MKYQLSILGD…NWLVPQNEPA (118 aa). Residues 124-222 enclose the PH domain; sequence NPDKSGYLIK…WIKAIELSQQ (99 aa). The segment covering 225-240 has biased composition (basic and acidic residues); the sequence is QDQEQYRKQEEEERQK. Disordered stretches follow at residues 225 to 289, 302 to 390, 426 to 558, 574 to 665, 685 to 768, 804 to 842, 1029 to 1051, 1106 to 1224, and 1476 to 1514; these read QDQE…SDGS, GPNN…SDLN, EQPG…SASP, SNLP…PLPN, NNNS…NNSL, KKKE…GTLR, QQQQ…SSVN, GTPT…PQPQ, and SSKV…SSLT. Composition is skewed to low complexity over residues 256–281 and 304–327; these read STLT…LPSS and NNSN…NNHN. Residues 328–348 are compositionally biased toward basic residues; the sequence is HYNHHNNNHNNSHHHHHHHNG. 2 stretches are compositionally biased toward low complexity: residues 353–376 and 426–437; these read SSQV…STSL and EQPGSYQQPQHQ. Positions 438–450 are enriched in gly residues; that stretch reads QGGGGGGGGGGGN. Residues 466-484 are compositionally biased toward low complexity; sequence SNLSSRSNSNSSGSSSGSG. Gly residues predominate over residues 485–501; the sequence is SSSGSGPIGSGGVGGGL. Composition is skewed to low complexity over residues 535 to 558 and 587 to 626; these read SNSS…SASP and NANN…NNGN. The segment covering 627–659 has biased composition (polar residues); that stretch reads TASGSSCNTTPNLLPAPTNVSPIQNRARSSPMT. Over residues 804 to 824 the composition is skewed to basic and acidic residues; that stretch reads KKKEKDKEKEKDKEKEKEKEI. Polar residues predominate over residues 827 to 841; sequence NISTSTTPNKKNGTL. A compositionally biased stretch (polar residues) spans 1106 to 1118; the sequence is GTPTTTSGDNTPL. Low complexity-rich tracts occupy residues 1119–1182, 1196–1221, and 1476–1492; these read TNTA…NSSI, EQQQ…QQQP, and SSKV…SPIL. Pro residues predominate over residues 1493–1507; the sequence is SSPPPPMKQPPPQVI. A Protein kinase domain is found at 1527–1851; sequence FEIIKPISRG…AYEVKTHPFF (325 aa). Residues 1533 to 1541 and Lys-1556 contribute to the ATP site; that span reads ISRGAFGRV. The active-site Proton acceptor is the Asp-1650. Low complexity-rich tracts occupy residues 1687–1729, 1902–1999, and 2006–2052; these read NTNT…SQTN, SQPQ…NINN, and NNNS…QINN. Disordered regions lie at residues 1687 to 1741 and 1902 to 2070; these read NTNT…KNTL and SQPQ…SKIE. Positions 1852–1911 constitute an AGC-kinase C-terminal domain; it reads ANVNWDTLIDQEMDNIFLPKPENNYDTDYFWDRQSMYDDEAEDDFLTINQSQPQHQSQHQ.

Belongs to the protein kinase superfamily. AGC Ser/Thr protein kinase family.

It catalyses the reaction L-seryl-[protein] + ATP = O-phospho-L-seryl-[protein] + ADP + H(+). It carries out the reaction L-threonyl-[protein] + ATP = O-phospho-L-threonyl-[protein] + ADP + H(+). The polypeptide is Probable serine/threonine-protein kinase DDB_G0272282 (Dictyostelium discoideum (Social amoeba)).